A 385-amino-acid polypeptide reads, in one-letter code: MAAHQGMAAATAADRFCLPRMAAAAAAASQVENWGDSGVIVSSPFTDDTSTDLDDSADKHHLHALVGGGDGGDDAGEQRGADSSAVSKERRGDQKMQRRLAQNREAARKSRMRKKAYIQQLESSRSKLMHLEQELQRARQQGIFIATGGSGDHGHSIGGNGTLAFDLEYARWLDEHQRHINDLRVALNAQMSDDELCELVDAVMMHYDQVFRLKSFATKSDVFHVLSGMWMSPAERFFMWLGGFRSSELLKVLASHLEPLTDQQLMGICNLQQSSQQAEDALSQGMEALQQTLGDTLVSAAATVVSGGGGADNVTNYMGQMAIAMAKLTTLENFLRQADLLRHQTLQQMHRILTTRQAARALLVISDYFSRLRALSSLWLARPRD.

The interval 62–113 (LHALVGGGDGGDDAGEQRGADSSAVSKERRGDQKMQRRLAQNREAARKSRMR) is disordered. Positions 87–96 (SKERRGDQKM) are enriched in basic and acidic residues. The bZIP domain occupies 93–137 (DQKMQRRLAQNREAARKSRMRKKAYIQQLESSRSKLMHLEQELQR). A basic motif region spans residues 95–115 (KMQRRLAQNREAARKSRMRKK). The leucine-zipper stretch occupies residues 121–135 (LESSRSKLMHLEQEL). The DOG1 domain maps to 162-382 (TLAFDLEYAR…RALSSLWLAR (221 aa)).

It belongs to the bZIP family. In terms of assembly, interacts with NPR1/NH1, NPR2/NH2 and NPR3/NH3.

The protein resides in the nucleus. Functionally, transcriptional regulator involved in defense response. The protein is Transcription factor TGAL3 of Oryza sativa subsp. japonica (Rice).